A 130-amino-acid chain; its full sequence is Fluoride-specific ion channel FluC (130 aa).

A run of 4 helical transmembrane segments spans residues 3–23 (FVFL…YFVG), 38–58 (LGTF…GHLA), 67–87 (FGIF…SYGL), and 102–122 (ISYV…GWFL). 2 residues coordinate Na(+): G77 and T80.

The protein belongs to the fluoride channel Fluc/FEX (TC 1.A.43) family.

It is found in the cell inner membrane. It catalyses the reaction fluoride(in) = fluoride(out). Na(+) is not transported, but it plays an essential structural role and its presence is essential for fluoride channel function. In terms of biological role, fluoride-specific ion channel. Important for reducing fluoride concentration in the cell, thus reducing its toxicity. The protein is Fluoride-specific ion channel FluC of Helicobacter pylori (strain G27).